The chain runs to 523 residues: 2-isopropylmalate synthase (523 aa).

The Pyruvate carboxyltransferase domain occupies 5-267 (VIIFDTTLRD…HTAINHQEIW (263 aa)). Positions 14, 202, 204, and 238 each coordinate Mn(2+). A regulatory domain region spans residues 392–523 (RLDYFSVQSG…QHNENNKETV (132 aa)).

This sequence belongs to the alpha-IPM synthase/homocitrate synthase family. LeuA type 1 subfamily. As to quaternary structure, homodimer. Mn(2+) serves as cofactor.

It is found in the cytoplasm. The enzyme catalyses 3-methyl-2-oxobutanoate + acetyl-CoA + H2O = (2S)-2-isopropylmalate + CoA + H(+). It participates in amino-acid biosynthesis; L-leucine biosynthesis; L-leucine from 3-methyl-2-oxobutanoate: step 1/4. Catalyzes the condensation of the acetyl group of acetyl-CoA with 3-methyl-2-oxobutanoate (2-ketoisovalerate) to form 3-carboxy-3-hydroxy-4-methylpentanoate (2-isopropylmalate). This chain is 2-isopropylmalate synthase, found in Escherichia coli O81 (strain ED1a).